The primary structure comprises 115 residues: Salivary anti-complement protein (115 aa).

Residues 1-22 form the signal peptide; that stretch reads MKFFYLIFSAIFFLADPALVKC. Intrachain disulfides connect Cys-26-Cys-108, Cys-41-Cys-92, and Cys-83-Cys-101.

May form multimers. As to expression, salivary gland (at protein level).

It localises to the secreted. Salivary protein that inhibits the classical pathway of complement system activation in the host while having no inhibitory effect on the alternative or lectin pathways. Prevent cleavage of host C4 and consequently impairs the activation of factors downstream of C4b in the complement cascade. The polypeptide is Salivary anti-complement protein (Lutzomyia longipalpis (Sand fly)).